Reading from the N-terminus, the 86-residue chain is Apolipoprotein C-I (86 aa).

Residues Met-1 to Gly-26 form the signal peptide.

It belongs to the apolipoprotein C1 family.

It is found in the secreted. Functionally, inhibitor of lipoprotein binding to the low density lipoprotein (LDL) receptor, LDL receptor-related protein, and very low density lipoprotein (VLDL) receptor. Associates with high density lipoproteins (HDL) and the triacylglycerol-rich lipoproteins in the plasma and makes up about 10% of the protein of the VLDL and 2% of that of HDL. Appears to interfere directly with fatty acid uptake and is also the major plasma inhibitor of cholesteryl ester transfer protein (CETP). Binds free fatty acids and reduces their intracellular esterification. Modulates the interaction of APOE with beta-migrating VLDL and inhibits binding of beta-VLDL to the LDL receptor-related protein. The sequence is that of Apolipoprotein C-I (APOC1) from Aotus nancymaae (Ma's night monkey).